The following is a 138-amino-acid chain: Small ribosomal subunit protein uS11c (138 aa).

Residues 1 to 23 (MAKAIPRRSSRRNGRIGSRKSAR) are disordered.

The protein belongs to the universal ribosomal protein uS11 family. In terms of assembly, part of the 30S ribosomal subunit.

It localises to the plastid. Its subcellular location is the chloroplast. The protein is Small ribosomal subunit protein uS11c of Ipomoea purpurea (Common morning glory).